Reading from the N-terminus, the 309-residue chain is Porphobilinogen deaminase (309 aa).

Cys-240 is subject to S-(dipyrrolylmethanemethyl)cysteine.

Belongs to the HMBS family. As to quaternary structure, monomer. It depends on dipyrromethane as a cofactor.

The enzyme catalyses 4 porphobilinogen + H2O = hydroxymethylbilane + 4 NH4(+). It functions in the pathway porphyrin-containing compound metabolism; protoporphyrin-IX biosynthesis; coproporphyrinogen-III from 5-aminolevulinate: step 2/4. Functionally, tetrapolymerization of the monopyrrole PBG into the hydroxymethylbilane pre-uroporphyrinogen in several discrete steps. The protein is Porphobilinogen deaminase of Brevibacillus brevis (strain 47 / JCM 6285 / NBRC 100599).